The chain runs to 98 residues: Class II hydrophobin 3 (98 aa).

The signal sequence occupies residues 1–18 (MQFTTTTLIAILSALAVA). N-linked (GlcNAc...) asparagine glycans are attached at residues Asn26 and Asn54. 4 disulfide bridges follow: Cys35–Cys83, Cys44–Cys74, Cys45–Cys57, and Cys84–Cys95.

The protein belongs to the cerato-ulmin hydrophobin family.

Its subcellular location is the secreted. It localises to the cell wall. Its function is as follows. Aerial growth, conidiation, and dispersal of filamentous fungi in the environment rely upon a capability of their secreting small amphipathic proteins called hydrophobins (HPBs) with low sequence identity. Class I can self-assemble into an outermost layer of rodlet bundles on aerial cell surfaces, conferring cellular hydrophobicity that supports fungal growth, development and dispersal; whereas Class II form highly ordered films at water-air interfaces through intermolecular interactions but contribute nothing to the rodlet structure. In Botryotinia fuckeliana, hydrophobins are not involved in conferring surface hydrophobicity to conidia and aerial hyphae and their function in sclerotia and fruiting bodies remains to be investigated. This Botryotinia fuckeliana (strain B05.10) (Noble rot fungus) protein is Class II hydrophobin 3.